The chain runs to 389 residues: COP9 signalosome complex subunit 11 (389 aa).

The PCI domain occupies 143–312 (QLIIDIPNLV…ILYQKFDPQM (170 aa)).

As to quaternary structure, component of a COP9 signalosome-like (CSN) complex.

The protein resides in the cytoplasm. It is found in the nucleus. Its function is as follows. Component of the COP9 signalosome (CSN) complex that acts as an regulator of the ubiquitin (Ubl) conjugation pathway by mediating the deneddylation of the cullin subunit of SCF-type E3 ubiquitin-protein ligase complexes The CSN complex is involved in the regulation of the mating pheromone response. PCI8 may also be involved in transcriptional and translational control. The protein is COP9 signalosome complex subunit 11 (PCI8) of Kluyveromyces lactis (strain ATCC 8585 / CBS 2359 / DSM 70799 / NBRC 1267 / NRRL Y-1140 / WM37) (Yeast).